Consider the following 369-residue polypeptide: uncharacterized protein (369 aa).

Lys-184 carries the post-translational modification N6-(pyridoxal phosphate)lysine.

Belongs to the class-V pyridoxal-phosphate-dependent aminotransferase family. It depends on pyridoxal 5'-phosphate as a cofactor.

This is an uncharacterized protein from Helicobacter pylori (strain J99 / ATCC 700824) (Campylobacter pylori J99).